A 333-amino-acid chain; its full sequence is Large ribosomal subunit protein mL44 (333 aa).

The N-terminal 30 residues, Met1 to Gly30, are a transit peptide targeting the mitochondrion. The 143-residue stretch at Asp86–Leu228 folds into the RNase III domain. One can recognise a DRBM domain in the interval Asn236–Gly306. Residues Arg311–Glu327 show a composition bias toward basic and acidic residues. The segment at Arg311 to Ser333 is disordered.

It belongs to the ribonuclease III family. Mitochondrion-specific ribosomal protein mL44 subfamily. Component of the mitochondrial ribosome large subunit (39S) which comprises a 16S rRNA and about 50 distinct proteins.

It is found in the mitochondrion. In terms of biological role, component of the 39S subunit of mitochondrial ribosome. May have a function in the assembly/stability of nascent mitochondrial polypeptides exiting the ribosome. The chain is Large ribosomal subunit protein mL44 (Mrpl44) from Mus musculus (Mouse).